We begin with the raw amino-acid sequence, 703 residues long: Protein teflon (703 aa).

The C2H2-type 1 zinc finger occupies 32 to 55 (MLCHFCKDIFTHLPEFMRHLQWSH). Disordered stretches follow at residues 78 to 111 (SSED…PGSS), 140 to 161 (EQSY…ARKP), 205 to 239 (NDVS…MPSL), and 339 to 434 (SQQP…SKLE). The segment covering 84-94 (QSQANSCSSGD) has biased composition (polar residues). Residues 148 to 161 (PDSRTEGFRCARKP) show a composition bias toward basic and acidic residues. 2 stretches are compositionally biased toward polar residues: residues 339-352 (SQQP…NNAV) and 364-373 (SLTVISSSPI). 2 consecutive C2H2-type zinc fingers follow at residues 649 to 672 (YFCE…QSVH) and 677 to 700 (FTCS…KTVH).

Belongs to the Teflon family.

It is found in the nucleus. Its subcellular location is the chromosome. Its function is as follows. Specifically required in males for proper segregation of autosomal bivalents at meiosis I. Expression is required in the male germ line prior to spermatocyte stage S4. May have a role as a bridging molecule maintaining adhesion to hold autosome bivalents together via heterochromatic connections. This is Protein teflon from Drosophila persimilis (Fruit fly).